The chain runs to 323 residues: MVTILDRTSSDEKRIRHPEKAHRPDTEVMRKPEWIRVKAPTSKGYHETRELVRSHKLVTVCEEAGCPNIGECWEKKHATFMIMGEICTRACAFCNVATGKPNALDMDEPENVAKAVKQMGLSHVVITSVDRDDLADGGAEHFEKVIWAIRAASPTTTIEILTPDFLKKPGALERVVAAKPDVFNHNMETVPGNYLTVRPGARYFHSVRLLQRVKELDPTMFTKSGIMVGLGEERNEVLQLMDDLRSADVDFLTIGQYLQPTRKHHKVEAFVTPEEFKSYETVAYAKGFLMVSSSPLTRSSHHAGDDFERLRAAREKKLLAAAE.

Residues 1-27 (MVTILDRTSSDEKRIRHPEKAHRPDTE) form a disordered region. The [4Fe-4S] cluster site is built by cysteine 61, cysteine 66, cysteine 72, cysteine 87, cysteine 91, cysteine 94, and serine 300. The region spanning 73-289 (WEKKHATFMI…ETVAYAKGFL (217 aa)) is the Radical SAM core domain.

Belongs to the radical SAM superfamily. Lipoyl synthase family. Requires [4Fe-4S] cluster as cofactor.

The protein localises to the cytoplasm. The catalysed reaction is [[Fe-S] cluster scaffold protein carrying a second [4Fe-4S](2+) cluster] + N(6)-octanoyl-L-lysyl-[protein] + 2 oxidized [2Fe-2S]-[ferredoxin] + 2 S-adenosyl-L-methionine + 4 H(+) = [[Fe-S] cluster scaffold protein] + N(6)-[(R)-dihydrolipoyl]-L-lysyl-[protein] + 4 Fe(3+) + 2 hydrogen sulfide + 2 5'-deoxyadenosine + 2 L-methionine + 2 reduced [2Fe-2S]-[ferredoxin]. It participates in protein modification; protein lipoylation via endogenous pathway; protein N(6)-(lipoyl)lysine from octanoyl-[acyl-carrier-protein]: step 2/2. Functionally, catalyzes the radical-mediated insertion of two sulfur atoms into the C-6 and C-8 positions of the octanoyl moiety bound to the lipoyl domains of lipoate-dependent enzymes, thereby converting the octanoylated domains into lipoylated derivatives. In Agrobacterium fabrum (strain C58 / ATCC 33970) (Agrobacterium tumefaciens (strain C58)), this protein is Lipoyl synthase.